Here is a 494-residue protein sequence, read N- to C-terminus: Glycosyl hydrolase family 109 protein (494 aa).

A disordered region spans residues 1 to 32 (MNDDARPAPEPQDIPPHSGAADEVNRQDPSRR). The segment at residues 1–58 (MNDDARPAPEPQDIPPHSGAADEVNRQDPSRRSVLWTTAGVAGAGLGLGALGAGTASA) is a signal peptide (tat-type signal). Residues 104-105 (NR), D126, 175-178 (WELH), 195-196 (EC), and N224 each bind NAD(+). Residues Y253, R272, 284–287 (YPNH), and Y366 each bind substrate. Residue Y284 participates in NAD(+) binding.

Belongs to the Gfo/Idh/MocA family. Glycosyl hydrolase 109 subfamily. The cofactor is NAD(+). Predicted to be exported by the Tat system. The position of the signal peptide cleavage has not been experimentally proven.

Glycosidase. This is Glycosyl hydrolase family 109 protein from Streptomyces filamentosus (Streptomyces roseosporus).